Here is a 95-residue protein sequence, read N- to C-terminus: Large ribosomal subunit protein uL23 (95 aa).

Belongs to the universal ribosomal protein uL23 family. As to quaternary structure, part of the 50S ribosomal subunit. Contacts protein L29, and trigger factor when it is bound to the ribosome.

One of the early assembly proteins it binds 23S rRNA. One of the proteins that surrounds the polypeptide exit tunnel on the outside of the ribosome. Forms the main docking site for trigger factor binding to the ribosome. The protein is Large ribosomal subunit protein uL23 of Leuconostoc mesenteroides subsp. mesenteroides (strain ATCC 8293 / DSM 20343 / BCRC 11652 / CCM 1803 / JCM 6124 / NCDO 523 / NBRC 100496 / NCIMB 8023 / NCTC 12954 / NRRL B-1118 / 37Y).